The primary structure comprises 842 residues: Elongation factor G, mitochondrial (842 aa).

The N-terminal 58 residues, 1–58, are a transit peptide targeting the mitochondrion; it reads MVAIPRVAAARSLARQLARQSLRTTSFASAPVRIAIASTPLARSPSSFRSLSSSTRRS. The tr-type G domain occupies 93–398; sequence VRQRNVGISA…GVCSYLPNPA (306 aa). Residues 102-109, 196-200, and 250-253 contribute to the GTP site; these read AHIDSGKT, DTPGH, and NKMD. The disordered stretch occupies residues 423 to 442; it reads AGEDQEAAAEARKNAAPPVL.

Belongs to the TRAFAC class translation factor GTPase superfamily. Classic translation factor GTPase family. EF-G/EF-2 subfamily.

It is found in the mitochondrion. Its pathway is protein biosynthesis; polypeptide chain elongation. Its function is as follows. Mitochondrial GTPase that catalyzes the GTP-dependent ribosomal translocation step during translation elongation. During this step, the ribosome changes from the pre-translocational (PRE) to the post-translocational (POST) state as the newly formed A-site-bound peptidyl-tRNA and P-site-bound deacylated tRNA move to the P and E sites, respectively. Catalyzes the coordinated movement of the two tRNA molecules, the mRNA and conformational changes in the ribosome. This Mycosarcoma maydis (Corn smut fungus) protein is Elongation factor G, mitochondrial.